A 392-amino-acid chain; its full sequence is Acetyl-CoA acetyltransferase (392 aa).

Residue Cys-85 is the Acyl-thioester intermediate of the active site. 4 residues coordinate CoA: Cys-206, Ser-207, Val-209, and Lys-332. His-336 serves as the catalytic Proton acceptor.

The protein belongs to the thiolase-like superfamily. Thiolase family. In terms of assembly, interacts with HMG-CoA synthase (HMGCS) that catalyzes the second step in the pathway and with a DUF35 protein. The acetoacetyl-CoA thiolase/HMG-CoA synthase complex channels the intermediate via a fused CoA-binding site, which allows for efficient coupling of the endergonic thiolase reaction with the exergonic HMGCS reaction.

The enzyme catalyses 2 acetyl-CoA = acetoacetyl-CoA + CoA. Its pathway is metabolic intermediate biosynthesis; (R)-mevalonate biosynthesis; (R)-mevalonate from acetyl-CoA: step 1/3. Catalyzes the condensation of two acetyl-coA molecules into acetoacetyl-CoA. Functions in the mevalonate (MVA) pathway leading to isopentenyl diphosphate (IPP), a key precursor for the biosynthesis of isoprenoid compounds that are building blocks of archaeal membrane lipids. The protein is Acetyl-CoA acetyltransferase of Methanothermococcus thermolithotrophicus (Methanococcus thermolithotrophicus).